The sequence spans 197 residues: MAKKKEVVRVAKLQFNAGQAKPGPELAGLGIVMPEFTKQFNDATRERSGEPVPVQIIVYKDKSFDFKLFTAPTSFMLKKAAGIKSGSANSKTTIVATIKKSQLEDIAKYKMPDLNTKNLEEAMHTIAGTARNMGILVEGYDDIVKAREEAKLAAKEAASAAAFEAKLESDAAQLLAENKQSAEVEVIKEKDKGNKDE.

Belongs to the universal ribosomal protein uL11 family. As to quaternary structure, part of the ribosomal stalk of the 50S ribosomal subunit. Interacts with L10 and the large rRNA to form the base of the stalk. L10 forms an elongated spine to which L12 dimers bind in a sequential fashion forming a multimeric L10(L12)X complex. Post-translationally, one or more lysine residues are methylated.

Its function is as follows. Forms part of the ribosomal stalk which helps the ribosome interact with GTP-bound translation factors. This is Large ribosomal subunit protein uL11 from Mycoplasma mobile (strain ATCC 43663 / 163K / NCTC 11711) (Mesomycoplasma mobile).